The primary structure comprises 191 residues: MIRISDSAQAHFAKLLANQEEGTQIRVFVINPGTPNAECGVSYCPPDAVEASDTALKFELLTAYVDELSAPYLDDAEIDFVTDQLGSQLTLKAPNAKMRKVSDDAPLMERVEYLLQSQINPQLAGHGGRVTLMEITEDGLAILQFGGGCNGCSMVDVTLKEGIEKQMLNEFPELKGVRDLTEHQRGEHSYY.

[4Fe-4S] cluster is bound by residues C149 and C152.

The protein belongs to the NfuA family. As to quaternary structure, homodimer. [4Fe-4S] cluster serves as cofactor.

Involved in iron-sulfur cluster biogenesis. Binds a 4Fe-4S cluster, can transfer this cluster to apoproteins, and thereby intervenes in the maturation of Fe/S proteins. Could also act as a scaffold/chaperone for damaged Fe/S proteins. The chain is Fe/S biogenesis protein NfuA from Enterobacter sp. (strain 638).